The sequence spans 268 residues: Undecaprenyl-diphosphatase (268 aa).

The next 7 membrane-spanning stretches (helical) occupy residues 47-67 (FAILIQLGAILAIVALYFFKL), 83-103 (FIIGVLIAFLPAVIIGLIAGK), 109-129 (LFDPWVVCFSLIVGGAILLWV), 144-164 (YPLLMYLWIGVAQCLAMIPGV), 184-204 (AAEFSFFLAIPTMVGAFVYDF), 218-238 (LVAIGFVVSFITAMIVVKAFL), and 246-266 (FVLFAWWRVIVGTLGLIALAL).

The protein belongs to the UppP family.

It localises to the cell inner membrane. It carries out the reaction di-trans,octa-cis-undecaprenyl diphosphate + H2O = di-trans,octa-cis-undecaprenyl phosphate + phosphate + H(+). Functionally, catalyzes the dephosphorylation of undecaprenyl diphosphate (UPP). Confers resistance to bacitracin. The polypeptide is Undecaprenyl-diphosphatase (Bradyrhizobium sp. (strain BTAi1 / ATCC BAA-1182)).